A 344-amino-acid polypeptide reads, in one-letter code: Heat-inducible transcription repressor HrcA (344 aa).

Belongs to the HrcA family.

Its function is as follows. Negative regulator of class I heat shock genes (grpE-dnaK-dnaJ and groELS operons). Prevents heat-shock induction of these operons. This is Heat-inducible transcription repressor HrcA from Streptococcus pneumoniae (strain P1031).